The chain runs to 540 residues: Cytochrome P450 monooxygenase prx8 (540 aa).

Residues 50–68 (ALGAAIALFACACAYALVA) form a helical membrane-spanning segment. N-linked (GlcNAc...) asparagine glycosylation is present at Asn460. Cys483 contributes to the heme binding site.

This sequence belongs to the cytochrome P450 family. Heme is required as a cofactor.

Its subcellular location is the membrane. Its pathway is sesquiterpene biosynthesis. Cytochrome P450 monooxygenase; part of the gene cluster that mediates the biosynthesis of PR-toxin, a bicyclic sesquiterpene belonging to the eremophilane class and acting as a mycotoxin. The first step of the pathway is catalyzed by the aristolochene synthase which performs the cyclization of trans,trans-farnesyl diphosphate (FPP) to the bicyclic sesquiterpene aristolochene. Following the formation of aristolochene, the non-oxygenated aristolochene is converted to the trioxygenated intermediate eremofortin B, via 7-epi-neopetasone. This conversion appears to involve three enzymes, a hydroxysterol oxidase-like enzyme, the quinone-oxidase prx3 that forms the quinone-type-structure in the bicyclic nucleus of aristolochene with the C8-oxo group and the C-3 hydroxyl group, and the P450 monooxygenase prx9 that introduces the epoxide at the double bond between carbons 1 and 2. No monoxy or dioxy-intermediates have been reported to be released to the broth, so these three early oxidative reactions may be coupled together. Eremofortin B is further oxidized by another P450 monooxygenase, that introduces a second epoxide between carbons 7 and 11 prior to acetylation to eremofortin A by the acetyltransferase prx11. The second epoxidation may be performed by a second P450 monooxygenase. After the acetylation step, eremofortin A is converted to eremofortin C and then to PR-toxin. First the conversion of eremofortin A to eremofortin C proceeds by oxidation of the side chain of the molecule at C-12 and is catalyzed by the short-chain oxidoreductase prx1. The cytochrome P450 monooxygenase prx8 also plays a role in this step. The primary alcohol formed at C-12 is finally oxidized by the short-chain alcohol dehydrogenase prx4 that forms PR-toxin. This Penicillium rubens (strain ATCC 28089 / DSM 1075 / NRRL 1951 / Wisconsin 54-1255) (Penicillium chrysogenum) protein is Cytochrome P450 monooxygenase prx8.